Reading from the N-terminus, the 36-residue chain is Alpha-conotoxin-like Pu1.3 (36 aa).

The propeptide occupies 1–21 (SDGRNAGADRKGFGLISQMFK). Intrachain disulfides connect Cys-24/Cys-30 and Cys-25/Cys-36.

Belongs to the conotoxin A superfamily. In terms of tissue distribution, expressed by the venom duct.

The protein localises to the secreted. Alpha-conotoxins act on postsynaptic membranes, they bind to the nicotinic acetylcholine receptors (nAChR) and thus inhibit them. The chain is Alpha-conotoxin-like Pu1.3 from Conus pulicarius (Flea-bitten cone).